Reading from the N-terminus, the 127-residue chain is Protein YwpG (127 aa).

Interacts with both the D1 and D2 domains of dynamin-like protein DynA.

The protein resides in the cell membrane. The sequence is that of Protein YwpG (ywpG) from Bacillus subtilis (strain 168).